Consider the following 317-residue polypeptide: Beta-ketoacyl-[acyl-carrier-protein] synthase III (317 aa).

Active-site residues include cysteine 112 and histidine 244. An ACP-binding region spans residues 245–249; it reads QANLR. Asparagine 274 is an active-site residue.

This sequence belongs to the thiolase-like superfamily. FabH family. Homodimer.

The protein resides in the cytoplasm. It carries out the reaction malonyl-[ACP] + acetyl-CoA + H(+) = 3-oxobutanoyl-[ACP] + CO2 + CoA. The protein operates within lipid metabolism; fatty acid biosynthesis. In terms of biological role, catalyzes the condensation reaction of fatty acid synthesis by the addition to an acyl acceptor of two carbons from malonyl-ACP. Catalyzes the first condensation reaction which initiates fatty acid synthesis and may therefore play a role in governing the total rate of fatty acid production. Possesses both acetoacetyl-ACP synthase and acetyl transacylase activities. Its substrate specificity determines the biosynthesis of branched-chain and/or straight-chain of fatty acids. In Shigella dysenteriae serotype 1 (strain Sd197), this protein is Beta-ketoacyl-[acyl-carrier-protein] synthase III.